Consider the following 342-residue polypeptide: Heat-inducible transcription repressor HrcA (342 aa).

This sequence belongs to the HrcA family.

Functionally, negative regulator of class I heat shock genes (grpE-dnaK-dnaJ and groELS operons). Prevents heat-shock induction of these operons. The sequence is that of Heat-inducible transcription repressor HrcA from Oceanobacillus iheyensis (strain DSM 14371 / CIP 107618 / JCM 11309 / KCTC 3954 / HTE831).